Reading from the N-terminus, the 444-residue chain is Exodeoxyribonuclease 7 large subunit (444 aa).

It belongs to the XseA family. In terms of assembly, heterooligomer composed of large and small subunits.

It is found in the cytoplasm. The catalysed reaction is Exonucleolytic cleavage in either 5'- to 3'- or 3'- to 5'-direction to yield nucleoside 5'-phosphates.. Bidirectionally degrades single-stranded DNA into large acid-insoluble oligonucleotides, which are then degraded further into small acid-soluble oligonucleotides. This chain is Exodeoxyribonuclease 7 large subunit, found in Aliivibrio salmonicida (strain LFI1238) (Vibrio salmonicida (strain LFI1238)).